Reading from the N-terminus, the 727-residue chain is Malate synthase G (727 aa).

Acetyl-CoA contacts are provided by residues Val-117, 124 to 125, Ser-275, and Arg-312; that span reads RY. The active-site Proton acceptor is Arg-339. Glyoxylate is bound by residues Arg-339, Glu-431, and 456-459; that span reads GFLD. Residues Glu-431 and Asp-459 each contribute to the Mg(2+) site. Pro-540 contributes to the acetyl-CoA binding site. Cys-616 carries the cysteine sulfenic acid (-SOH) modification. Asp-630 functions as the Proton donor in the catalytic mechanism.

It belongs to the malate synthase family. GlcB subfamily. Monomer. Mg(2+) is required as a cofactor.

The protein localises to the cytoplasm. The enzyme catalyses glyoxylate + acetyl-CoA + H2O = (S)-malate + CoA + H(+). Its pathway is carbohydrate metabolism; glyoxylate cycle; (S)-malate from isocitrate: step 2/2. In terms of biological role, involved in the glycolate utilization. Catalyzes the condensation and subsequent hydrolysis of acetyl-coenzyme A (acetyl-CoA) and glyoxylate to form malate and CoA. The chain is Malate synthase G from Halalkalibacterium halodurans (strain ATCC BAA-125 / DSM 18197 / FERM 7344 / JCM 9153 / C-125) (Bacillus halodurans).